The sequence spans 233 residues: Large ribosomal subunit protein uL1 (233 aa).

The protein belongs to the universal ribosomal protein uL1 family. Part of the 50S ribosomal subunit.

Its function is as follows. Binds directly to 23S rRNA. The L1 stalk is quite mobile in the ribosome, and is involved in E site tRNA release. Protein L1 is also a translational repressor protein, it controls the translation of the L11 operon by binding to its mRNA. In Finegoldia magna (strain ATCC 29328 / DSM 20472 / WAL 2508) (Peptostreptococcus magnus), this protein is Large ribosomal subunit protein uL1.